The primary structure comprises 377 residues: Probable multidrug ABC transporter permease YbhS (377 aa).

The Cytoplasmic portion of the chain corresponds to Met-1–Ser-28. A helical membrane pass occupies residues Trp-29–Leu-49. Residues Asp-50–His-181 lie on the Periplasmic side of the membrane. The 231-residue stretch at Ile-145–Arg-375 folds into the ABC transmembrane type-2 domain. The chain crosses the membrane as a helical span at residues Phe-182–Leu-202. Residues Val-203–Tyr-234 lie on the Cytoplasmic side of the membrane. Residues Tyr-235–Val-255 traverse the membrane as a helical segment. Residues Pro-256–Leu-261 are Periplasmic-facing. The helical transmembrane segment at Leu-262–Ile-282 threads the bilayer. The Cytoplasmic portion of the chain corresponds to Ser-283 to Asn-291. The helical transmembrane segment at Ala-292–Phe-312 threads the bilayer. Over Gln-313–Asn-345 the chain is Periplasmic. A helical transmembrane segment spans residues Ile-346–Gly-366. Residues Leu-367–Asp-377 lie on the Cytoplasmic side of the membrane.

It belongs to the ABC-2 integral membrane protein family. The complex is probably composed of two ATP-binding proteins (YbhF) and two transmembrane proteins (YbhR and YbhS).

Its subcellular location is the cell inner membrane. In terms of biological role, part of the ABC transporter complex YbhFSR that could be involved in efflux of cefoperazone. Probably involved in the translocation of the substrate across the membrane. In Escherichia coli O157:H7, this protein is Probable multidrug ABC transporter permease YbhS (ybhS).